The following is a 356-amino-acid chain: Dual-specificity RNA methyltransferase RlmN (356 aa).

Glu-95 (proton acceptor) is an active-site residue. Residues 101–332 (EDERGTLCIS…VTVIRDRRGE (232 aa)) form the Radical SAM core domain. A disulfide bond links Cys-108 and Cys-338. [4Fe-4S] cluster is bound by residues Cys-115, Cys-119, and Cys-122. S-adenosyl-L-methionine-binding positions include 165 to 166 (GE), Ser-197, 219 to 221 (SLH), and Asn-295. Cys-338 acts as the S-methylcysteine intermediate in catalysis.

It belongs to the radical SAM superfamily. RlmN family. It depends on [4Fe-4S] cluster as a cofactor.

The protein localises to the cytoplasm. It carries out the reaction adenosine(2503) in 23S rRNA + 2 reduced [2Fe-2S]-[ferredoxin] + 2 S-adenosyl-L-methionine = 2-methyladenosine(2503) in 23S rRNA + 5'-deoxyadenosine + L-methionine + 2 oxidized [2Fe-2S]-[ferredoxin] + S-adenosyl-L-homocysteine. It catalyses the reaction adenosine(37) in tRNA + 2 reduced [2Fe-2S]-[ferredoxin] + 2 S-adenosyl-L-methionine = 2-methyladenosine(37) in tRNA + 5'-deoxyadenosine + L-methionine + 2 oxidized [2Fe-2S]-[ferredoxin] + S-adenosyl-L-homocysteine. Specifically methylates position 2 of adenine 2503 in 23S rRNA and position 2 of adenine 37 in tRNAs. m2A2503 modification seems to play a crucial role in the proofreading step occurring at the peptidyl transferase center and thus would serve to optimize ribosomal fidelity. This is Dual-specificity RNA methyltransferase RlmN from Magnetococcus marinus (strain ATCC BAA-1437 / JCM 17883 / MC-1).